Reading from the N-terminus, the 334-residue chain is Fructose-1,6-bisphosphatase class 1 (334 aa).

Mg(2+)-binding residues include E93, D117, L119, and D120. Substrate is bound by residues 120–123, N213, Y244, and K274; that span reads DGSS. E280 is a Mg(2+) binding site.

The protein belongs to the FBPase class 1 family. Homotetramer. Requires Mg(2+) as cofactor.

The protein localises to the cytoplasm. It catalyses the reaction beta-D-fructose 1,6-bisphosphate + H2O = beta-D-fructose 6-phosphate + phosphate. It participates in carbohydrate biosynthesis; gluconeogenesis. This is Fructose-1,6-bisphosphatase class 1 from Flavobacterium johnsoniae (strain ATCC 17061 / DSM 2064 / JCM 8514 / BCRC 14874 / CCUG 350202 / NBRC 14942 / NCIMB 11054 / UW101) (Cytophaga johnsonae).